Here is a 1136-residue protein sequence, read N- to C-terminus: MDPGSRWRNLPSGPSLKHLTDPSYGIPREQQKAALQELTRAHVESFNYAVHEGLGLAVQAIPPFEFAFKDERISFTILDAVISPPTVPKGTICKEVSVYPAECRGRRCTYRGKLTADISWAVNGISKGIIKQFLGYVPIMVKSKLCNLYNLPPQALIEHHEEAEEMGGYFIINGIEKVIRMLIMPRRNFPIAMVRPKWKTRGPGYTHYGVSMHCVREEHSAVNMNLHYLENGTVMLNFIYRKELFFLPLGFALKALVSFSDYQIFQELIKGKEDDSFLRNSVSQMLRIVMEEGCSTQKQVLNYLGECFRVKLNVPDWYPNEQAAEFLFNQCICIHLKSNTEKFYMLCLMTRKLFALAKGECMEDNPDSLVNQEVLTPGQLFLMFLKEKLEGWLVSIKIAFDKKAQKTNVSMNTDNLMRIFTMGIDLTKPFEYLFATGNLRSKTGLGLLQDSGLCVVADKLNFIRYLSHFRCVHRGADFAKMRTTTVRRLLPESWGFLCPVHTPDGEPCGLMNHLTAVCEVVTQFVYTASIPALLCNLGVTPIDGAPHRSYSECYPVLLDGVMVGWVDKELAPGIADSLRHFKVLREKRIPPWTEVVLIPMTGKPSLYPGLFLFTTPCRLVRPVQNLELGKEELIGTMEQIFMNVAIFEDEVFAGVTTHQELFPHSLLSVIANFIPFSDHNQSPRNMYQCQMGKQTMGFPLLTYQDRSDNKLYRLQTPQSPLVRPSMYDYYDMDNYPIGTNAIVAVISYTGYDMEDAMIVNKASWERGFAHGSVYKSEFIDLSEKIKQGDSSLVFGMKPGDPRILQKLDDDGLPFIGAKLQYGDPYYSYLNLNTGESFVMYYKSKENCVVDNIKVCSNDTGSGKFKCVCITMRVPRNPTIGDKFASRHGQKGILSRLWPAEDMPFTESGMVPDILFNPHGFPSRMTIGMLIESMAGKSAALHGLCHDATPFIFSEENSALEYFGEMLKAAGYNFYGTERLYSGISGLELEADIFIGVVYYQRLRHMVSDKFQVRTTGARDRVTNQPIGGRNVQGGIRFGEMERDALLAHGTSFFLLHDRLFNCSDRSVAHVCVKCGSLLSPLLEKPPPSWSAMRNRKYNCTLCNRSDTIDTVSVPYVFRYFVAELAAMNIKVKLDVV.

The interval 1–24 (MDPGSRWRNLPSGPSLKHLTDPSY) is disordered. An RNA-binding site is contributed by R180. The tract at residues 194-208 (VRPKWKTRGPGYTHY) is loop B. The segment at 236–247 (LNFIYRKELFFL) is loop A. Residue D367 coordinates RNA. 2 fork loop regions span residues 439-453 (LRSK…DSGL) and 474-489 (RGAD…VRRL). K890 is an RNA binding site. DNA-binding residues include R1020 and R1036. Phosphoserine is present on S1051. Zn(2+) contacts are provided by C1071, C1074, C1099, and C1102. The C4-type zinc finger occupies 1071 to 1102 (CVKCGSLLSPLLEKPPPSWSAMRNRKYNCTLC).

This sequence belongs to the RNA polymerase beta chain family. As to quaternary structure, component of the RNA polymerase I (Pol I) complex consisting of 13 subunits: a ten-subunit catalytic core composed of POLR1A/RPA1, POLR1B/RPA2, POLR1C/RPAC1, POLR1D/RPAC2, POLR1H/RPA12, POLR2E/RPABC1, POLR2F/RPABC2, POLR2H/RPABC3, POLR2K/RPABC4 and POLR2L/RPABC5; a mobile stalk subunit POLR1F/RPA43 protruding from the core and additional subunits homologous to general transcription factors POLR1E/RPA49 and POLR1G/RPA34. Part of Pol I pre-initiation complex (PIC), in which Pol I core assembles with RRN3 and promoter-bound UTBF and SL1/TIF-IB complex.

It localises to the nucleus. The protein localises to the nucleolus. It is found in the chromosome. It carries out the reaction RNA(n) + a ribonucleoside 5'-triphosphate = RNA(n+1) + diphosphate. In terms of biological role, catalytic core component of RNA polymerase I (Pol I), a DNA-dependent RNA polymerase which synthesizes ribosomal RNA precursors using the four ribonucleoside triphosphates as substrates. Transcribes 47S pre-rRNAs from multicopy rRNA gene clusters, giving rise to 5.8S, 18S and 28S ribosomal RNAs. Pol I-mediated transcription cycle proceeds through transcription initiation, transcription elongation and transcription termination stages. During transcription initiation, Pol I pre-initiation complex (PIC) is recruited by the selectivity factor 1 (SL1/TIF-IB) complex bound to the core promoter that precedes an rDNA repeat unit. The PIC assembly bends the promoter favoring the formation of the transcription bubble and promoter escape. Once the polymerase has escaped from the promoter it enters the elongation phase during which RNA is actively polymerized, based on complementarity with the template DNA strand. Highly processive, assembles in structures referred to as 'Miller trees' where many elongating Pol I complexes queue and transcribe the same rDNA coding regions. At terminator sequences downstream of the rDNA gene, PTRF interacts with Pol I and halts Pol I transcription leading to the release of the RNA transcript and polymerase from the DNA. Forms Pol I active center together with the largest subunit POLR1A/RPA1. Appends one nucleotide at a time to the 3' end of the nascent RNA, with POLR1A/RPA1 contributing a Mg(2+)-coordinating DxDGD motif, and POLR1B/RPA2 providing lysine residues believed to facilitate Watson-Crick base pairing between the incoming nucleotide and the template base. Typically, Mg(2+) ions direct a 5' nucleoside triphosphate to form a phosphodiester bond with the 3' hydroxyl of the preceding nucleotide of the nascent RNA, with the elimination of pyrophosphate. Has proofreading activity: Pauses and backtracks to allow the cleavage of a missincorporated nucleotide via POLR1H/RPA12. High Pol I processivity is associated with decreased transcription fidelity. The polypeptide is DNA-directed RNA polymerase I subunit RPA2 (POLR1B) (Pongo abelii (Sumatran orangutan)).